Consider the following 412-residue polypeptide: SFNFCLPNLSFRSSCSSRPCVPSSCCGTTLPGACNIPANVGSCNWFCEGSFDGNEKETMQFLNDRLASYLEKVRQLERENAELESRILERSQQQEPLVCPNYQSYFRTIEELQQKILCAKSENARLVVQIDNAKLAADDFRTKYETELGLRQLVESDINGLRRILDELTLCKSDLEAQVESLKEELICLKSNHEEEVNTLRSQLGDRLNVEVDAAPTVDLNRVLNETRAQYEALVETNRRDVEEWYIRQTEELNKQVVSSSEQLQSCQTEIIELRRTVNALEVELQAQHNLRDSLENTLTETEARYSCQLNQVQSLISNVESQLAEIRGDLERQNQEYQVLLDVRARLECEINTYRGLLDSEDCKLPCNPCATTNACGKTITPCISSPCAPAAPCTPCVPRSRCGPCNSYVR.

At serine 1 the chain carries N-acetylserine. The segment at 1–55 (SFNFCLPNLSFRSSCSSRPCVPSSCCGTTLPGACNIPANVGSCNWFCEGSFDGNE) is head. One can recognise an IF rod domain in the interval 55 to 366 (EKETMQFLND…GLLDSEDCKL (312 aa)). The interval 56 to 90 (KETMQFLNDRLASYLEKVRQLERENAELESRILER) is coil 1A. The tract at residues 91-101 (SQQQEPLVCPN) is linker 1. The interval 102–202 (YQSYFRTIEE…HEEEVNTLRS (101 aa)) is coil 1B. Residues 203 to 218 (QLGDRLNVEVDAAPTV) form a linker 12 region. Residues 219-362 (DLNRVLNETR…NTYRGLLDSE (144 aa)) form a coil 2 region. Positions 363–412 (DCKLPCNPCATTNACGKTITPCISSPCAPAAPCTPCVPRSRCGPCNSYVR) are tail.

The protein belongs to the intermediate filament family.

Functionally, wool microfibrillar keratin. This chain is Keratin, type I microfibrillar 48 kDa, component 8C-1, found in Ovis aries (Sheep).